The chain runs to 577 residues: Proline--tRNA ligase (577 aa).

Belongs to the class-II aminoacyl-tRNA synthetase family. ProS type 1 subfamily. In terms of assembly, homodimer.

Its subcellular location is the cytoplasm. It carries out the reaction tRNA(Pro) + L-proline + ATP = L-prolyl-tRNA(Pro) + AMP + diphosphate. Its function is as follows. Catalyzes the attachment of proline to tRNA(Pro) in a two-step reaction: proline is first activated by ATP to form Pro-AMP and then transferred to the acceptor end of tRNA(Pro). As ProRS can inadvertently accommodate and process non-cognate amino acids such as alanine and cysteine, to avoid such errors it has two additional distinct editing activities against alanine. One activity is designated as 'pretransfer' editing and involves the tRNA(Pro)-independent hydrolysis of activated Ala-AMP. The other activity is designated 'posttransfer' editing and involves deacylation of mischarged Ala-tRNA(Pro). The misacylated Cys-tRNA(Pro) is not edited by ProRS. This Chlamydia felis (strain Fe/C-56) (Chlamydophila felis) protein is Proline--tRNA ligase.